Here is a 723-residue protein sequence, read N- to C-terminus: Zinc finger protein 750 (723 aa).

Residues 25-51 form a CCHC-type zinc finger; sequence YKCFQCPFTCNEKSHLFNHMKYGLCKN. Residues C27, C30, H43, and C49 each coordinate Zn(2+). 5 disordered regions span residues 64 to 91, 132 to 153, 359 to 427, 466 to 630, and 650 to 723; these read KCPKSNSLDPKQTNQPDATAKPASSKSV, LHRASPCKSPAPEAALGAQPAL, ASSP…SQTC, PAQA…SEEQ, and RVGD…ARVS. A compositionally biased stretch (polar residues) spans 67-91; that stretch reads KSNSLDPKQTNQPDATAKPASSKSV. Positions 360–369 are enriched in polar residues; it reads SSPSRLNPSD. Over residues 370-397 the composition is skewed to basic and acidic residues; sequence PNRKHVEFESPIPEAKDSSKAGQRDTEG. Polar residues predominate over residues 470-482; it reads AETTAESPVSLNV. Positions 500 to 509 are enriched in low complexity; sequence AAPSSPDDSS. The segment covering 530-545 has biased composition (polar residues); the sequence is PTYQGSPQAETASFSE. 2 stretches are compositionally biased toward low complexity: residues 563 to 582 and 606 to 616; these read APRPAFPGRPRAAEPAAAVP and GDGAPPTGPGE. Over residues 666–678 the composition is skewed to polar residues; that stretch reads DTPTLSSMESQEA.

As to expression, expressed in the skin, prostate, lung, placenta and thymus, and at low level in T-cells. Not expressed in peripheral blood leukocytes, pancreas and brain. Clearly expressed in primary keratinocytes but not in fibroblasts.

Its subcellular location is the nucleus. Its function is as follows. Transcription factor involved in epidermis differentiation. Required for terminal epidermal differentiation: acts downstream of p63/TP63 and activates expression of late epidermal differentiation genes. Specifically binds to the promoter of KLF4 and promotes its expression. This is Zinc finger protein 750 (ZNF750) from Homo sapiens (Human).